Reading from the N-terminus, the 348-residue chain is Endoplasmic reticulum junction formation protein lunapark-A (348 aa).

Residues 1–43 (MSVFCLQAKPTTVEILEGIDKDIQILEDYSVKYQRQMKAVVGR) are Cytoplasmic-facing. A helical transmembrane segment spans residues 44 to 64 (LLLYSILLYLMAGVVVYSWYL). Residues 65-67 (PEQ) lie on the Lumenal side of the membrane. A helical membrane pass occupies residues 68–88 (LMGRLVLGLPFLLFPLLVWIL). At 89–348 (RKVLILFFAR…EEDKQSDSGD (260 aa)) the chain is on the cytoplasmic side. Residues 105–126 (FKLEDLKAQKRKILEDVMETET) adopt a coiled-coil conformation. Positions 142-211 (KKKTDFDSTP…HSAPGGPPER (70 aa)) are disordered. The C4-type; plays a role in ER morphology zinc finger occupies 277 to 302 (CQQCLSHNGMALKEEFEYVAFRCAYC). Residues 313 to 348 (PQAPRLPETAGEPKLPCDLNSSSCAAEEDKQSDSGD) form a disordered region. Residues 339-348 (EEDKQSDSGD) are compositionally biased toward basic and acidic residues.

Belongs to the lunapark family. Homodimer; homodimerization requires the C4-type zinc finger motif and decreases during mitosis in a phosphorylation-dependent manner. In terms of processing, phosphorylated. Phosphorylation occurs during interphase. Phosphorylation also occurs during mitosis; these phosphorylations reduce both its homodimerization and the ER three-way tubular junction formation.

The protein localises to the endoplasmic reticulum membrane. Endoplasmic reticulum (ER)-shaping membrane protein that plays a role in determining ER morphology. Involved in the stabilization of nascent three-way ER tubular junctions within the ER network. May also play a role as a curvature-stabilizing protein within three-way ER tubular junction network. This Takifugu rubripes (Japanese pufferfish) protein is Endoplasmic reticulum junction formation protein lunapark-A (lnpka).